Here is an 89-residue protein sequence, read N- to C-terminus: DNA-directed RNA polymerase subunit Rpo6 (89 aa).

The protein belongs to the archaeal Rpo6/eukaryotic RPB6 RNA polymerase subunit family. In terms of assembly, part of the 13-subunit RNA polymerase complex.

It is found in the cytoplasm. The catalysed reaction is RNA(n) + a ribonucleoside 5'-triphosphate = RNA(n+1) + diphosphate. Its function is as follows. DNA-dependent RNA polymerase (RNAP) catalyzes the transcription of DNA into RNA using the four ribonucleoside triphosphates as substrates. Functionally, reconstitution experiments show this subunit is required for basic activity. This is DNA-directed RNA polymerase subunit Rpo6 from Sulfolobus acidocaldarius (strain ATCC 33909 / DSM 639 / JCM 8929 / NBRC 15157 / NCIMB 11770).